The chain runs to 169 residues: Capsid protein (169 aa).

Belongs to the nanoviridae capsid protein family.

The protein localises to the virion. The chain is Capsid protein (DNA-S) from Subterranean clover stunt virus (strain F) (SCSV).